The chain runs to 108 residues: Large ribosomal subunit protein uL11 (108 aa).

It belongs to the universal ribosomal protein uL11 family. Part of the ribosomal stalk of the 50S ribosomal subunit. Interacts with L10 and the large rRNA to form the base of the stalk. L10 forms an elongated spine to which L12 dimers bind in a sequential fashion forming a multimeric L10(L12)X complex.

Its function is as follows. Forms part of the ribosomal stalk which helps the ribosome interact with GTP-bound translation factors. The chain is Large ribosomal subunit protein uL11 (rpl11) from Aeropyrum pernix (strain ATCC 700893 / DSM 11879 / JCM 9820 / NBRC 100138 / K1).